Consider the following 479-residue polypeptide: Arf-GAP domain and FG repeat-containing protein 2 (479 aa).

In terms of domain architecture, Arf-GAP spans 27–153 (EVWCRRVREL…WYVPPEQVKG (127 aa)). The segment at 47-70 (CFECAQRGVTYVDITVGSFVCTTC) adopts a C4-type zinc-finger fold. Disordered stretches follow at residues 150–223 (QVKG…TKKA) and 450–479 (LSQP…NPFL). Residues 157-167 (SKGSVSATPVQ) are compositionally biased toward polar residues. Residue Lys-174 is modified to N6-acetyllysine. Positions 194–218 (SSQPGSQSQARSSSQARSSQPPSHS) are enriched in low complexity. Over residues 454 to 479 (AGISTNPFMTGSSAFASKPPTTNPFL) the composition is skewed to polar residues.

As to quaternary structure, interacts with EPS15R.

In Mus musculus (Mouse), this protein is Arf-GAP domain and FG repeat-containing protein 2 (Agfg2).